A 351-amino-acid chain; its full sequence is Uroporphyrinogen decarboxylase (351 aa).

Substrate contacts are provided by residues 27–31 (RQAGR), Asp-77, Tyr-154, Thr-209, and His-327.

The protein belongs to the uroporphyrinogen decarboxylase family. Homodimer.

The protein localises to the cytoplasm. The catalysed reaction is uroporphyrinogen III + 4 H(+) = coproporphyrinogen III + 4 CO2. The protein operates within porphyrin-containing compound metabolism; protoporphyrin-IX biosynthesis; coproporphyrinogen-III from 5-aminolevulinate: step 4/4. Catalyzes the decarboxylation of four acetate groups of uroporphyrinogen-III to yield coproporphyrinogen-III. The sequence is that of Uroporphyrinogen decarboxylase from Thioalkalivibrio sulfidiphilus (strain HL-EbGR7).